The following is a 371-amino-acid chain: S-adenosylmethionine:tRNA ribosyltransferase-isomerase (371 aa).

The protein belongs to the QueA family. As to quaternary structure, monomer.

The protein resides in the cytoplasm. It carries out the reaction 7-aminomethyl-7-carbaguanosine(34) in tRNA + S-adenosyl-L-methionine = epoxyqueuosine(34) in tRNA + adenine + L-methionine + 2 H(+). It participates in tRNA modification; tRNA-queuosine biosynthesis. Functionally, transfers and isomerizes the ribose moiety from AdoMet to the 7-aminomethyl group of 7-deazaguanine (preQ1-tRNA) to give epoxyqueuosine (oQ-tRNA). This is S-adenosylmethionine:tRNA ribosyltransferase-isomerase from Nitratidesulfovibrio vulgaris (strain ATCC 29579 / DSM 644 / CCUG 34227 / NCIMB 8303 / VKM B-1760 / Hildenborough) (Desulfovibrio vulgaris).